Consider the following 343-residue polypeptide: Isopentenyl-diphosphate delta-isomerase (343 aa).

9-10 (RK) is a binding site for substrate. FMN-binding positions include Ser-66, 67–69 (SMT), Ser-98, and Asn-126. Residue 98–100 (SQR) coordinates substrate. Substrate is bound at residue Gln-161. Residue Glu-162 coordinates Mg(2+). Residues Lys-193, Thr-223, 273-275 (GIR), and 294-295 (AA) contribute to the FMN site.

This sequence belongs to the IPP isomerase type 2 family. In terms of assembly, homooctamer. Dimer of tetramers. It depends on FMN as a cofactor. NADPH serves as cofactor. Requires Mg(2+) as cofactor.

The protein resides in the cytoplasm. It carries out the reaction isopentenyl diphosphate = dimethylallyl diphosphate. Its function is as follows. Involved in the biosynthesis of isoprenoids. Catalyzes the 1,3-allylic rearrangement of the homoallylic substrate isopentenyl (IPP) to its allylic isomer, dimethylallyl diphosphate (DMAPP). This is Isopentenyl-diphosphate delta-isomerase from Hydrogenovibrio crunogenus (strain DSM 25203 / XCL-2) (Thiomicrospira crunogena).